A 243-amino-acid polypeptide reads, in one-letter code: Amphiregulin (243 aa).

The first 24 residues, 1 to 24, serve as a signal peptide directing secretion; the sequence is MRTPSLSLALSVLSLLVLGSGHYA. Residues 25–96 constitute a propeptide that is removed on maturation; it reads AGLELNGTSS…IVDDSVRVEQ (72 aa). Asparagine 30 is a glycosylation site (N-linked (GlcNAc...) asparagine). The span at 55-67 shows a compositional bias: polar residues; sequence STISEMPSGSELS. 2 disordered regions span residues 55 to 75 and 98 to 135; these read STIS…DYSE and IKPK…KKKN. The segment covering 98 to 113 has biased composition (basic and acidic residues); that stretch reads IKPKENKTEGEKSSEK. N-linked (GlcNAc...) asparagine glycosylation occurs at asparagine 103. Positions 114–135 are enriched in basic residues; sequence PKRKKKGGKGGKGRRNRKKKKN. In terms of domain architecture, EGF-like spans 133–173; it reads KKNPCAAKFQNFCIHGECRYIENLEVVTCHCHQDYFGERCG. 3 disulfide bridges follow: cysteine 137-cysteine 150, cysteine 145-cysteine 161, and cysteine 163-cysteine 172. A helical membrane pass occupies residues 190–213; the sequence is IALAAIIVFVSAVSVAAIGIITAV. Asparagine 236 carries an N-linked (GlcNAc...) asparagine glycan.

This sequence belongs to the amphiregulin family. The immature precursor interacts with CNIH.

It localises to the membrane. Its function is as follows. Ligand of the EGF receptor/EGFR. Autocrine growth factor as well as a mitogen for a broad range of target cells including astrocytes, Schwann cells and fibroblasts. This chain is Amphiregulin (Areg), found in Rattus norvegicus (Rat).